The following is a 254-amino-acid chain: L-rhamnose 1-dehydrogenase (NAD(P)(+)) (254 aa).

Residues Gly13, Ser15, Ile18, Asp64, Val65, and Asn91 each coordinate NADP(+). The Proton donor role is filled by Ser144. Ser144, Ser146, Gln154, and Tyr157 together coordinate beta-L-rhamnose. NADP(+) is bound by residues Tyr157 and Lys161. Catalysis depends on Tyr157, which acts as the Proton acceptor. Lys161 functions as the Lowers pKa of active site Tyr in the catalytic mechanism. Thr189 is a binding site for beta-L-rhamnose. Ile190 provides a ligand contact to NADP(+). Asn195 contributes to the beta-L-rhamnose binding site.

Belongs to the short-chain dehydrogenases/reductases (SDR) family.

It catalyses the reaction L-rhamnofuranose + NAD(+) = L-rhamnono-1,4-lactone + NADH + H(+). The enzyme catalyses L-rhamnofuranose + NADP(+) = L-rhamnono-1,4-lactone + NADPH + H(+). It participates in carbohydrate degradation; L-rhamnose degradation. NAD(P)-dependent dehydrogenase that catalyzes the oxidation of L-rhamnose to L-rhamnono-1,4-lactone. Also shows high activity with L-lyxose and low activity with L-mannose. Can utilize either NAD(+) or NADP(+), with a slight preference for NADP(+). Catalyzes the first step in an alternative pathway for rhamnose utilization that does not involve phosphorylated intermediates. The chain is L-rhamnose 1-dehydrogenase (NAD(P)(+)) from Sphingomonas sp. (strain SKA58).